The primary structure comprises 294 residues: MERVYRTDLKLLRYFLAVAEELHFGRAAARLNMSQPPLSIHIKELENQLGTQLFIRHSRSVVLTHAGKILMEESRRLLVNANNVLARIEQIGRGEAGRIELGVVGTAMWGRMRPVMRRFLRENPNVDVLFREKMPAMQMALLERRELDAGIWRMATEPPTGFTSLRLHESAFLVAMPEEHHLSSFSTVPLEALRDEYFVTMPPVYTDWDFLQRVCQQVGFSPVVIREVNEPQTVLAMVSMGIGITLIADSYAQMNWPGVIFRPLKQRIPADLYIVYETQQVTPAMVKLLAALTQ.

The HTH lysR-type domain maps to 7–64; it reads TDLKLLRYFLAVAEELHFGRAAARLNMSQPPLSIHIKELENQLGTQLFIRHSRSVVLT. The segment at residues 24–43 is a DNA-binding region (H-T-H motif); the sequence is FGRAAARLNMSQPPLSIHIK.

It belongs to the LysR transcriptional regulatory family.

In terms of biological role, positive regulator required for the expression of xapA and xapB. Binds to the inducer xanthosine. This is HTH-type transcriptional regulator XapR (xapR) from Escherichia coli (strain K12).